A 211-amino-acid chain; its full sequence is Transcriptional regulatory protein RcsA (211 aa).

The HTH luxR-type domain maps to 135–200 (SEVHPFTLSQ…VIYHVVRLTD (66 aa)). The H-T-H motif DNA-binding region spans 159–178 (TIQISDKMQIKAKTVSSHKG).

This sequence belongs to the RcsA family.

Functionally, component of the Rcs signaling system, which controls transcription of numerous genes. Binds to DNA to regulate expression of genes. This is Transcriptional regulatory protein RcsA from Erwinia amylovora (Fire blight bacteria).